The following is a 189-amino-acid chain: GTPase NRas (189 aa).

GTP is bound at residue G10 to S17. Positions Y32 to Y40 match the Effector region motif. Residues D57–Q61 and N116–D119 contribute to the GTP site. Positions Y166–P185 are hypervariable region. The S-palmitoyl cysteine moiety is linked to residue C181. C186 is lipidated: S-farnesyl cysteine. A propeptide spans K187–M189 (removed in mature form).

Belongs to the small GTPase superfamily. Ras family. Palmitoylated by the ZDHHC9-GOLGA7 complex. Depalmitoylated by abhd17a, abhd17b and abhd17c. A continuous cycle of de- and re-palmitoylation regulates rapid exchange between plasma membrane and Golgi.

The protein resides in the cell membrane. It localises to the golgi apparatus membrane. The catalysed reaction is GTP + H2O = GDP + phosphate + H(+). Alternates between an inactive form bound to GDP and an active form bound to GTP. Activated by a guanine nucleotide-exchange factor (GEF) and inactivated by a GTPase-activating protein (GAP). Its function is as follows. Ras proteins bind GDP/GTP and possess intrinsic GTPase activity. The polypeptide is GTPase NRas (nras) (Xenopus laevis (African clawed frog)).